Reading from the N-terminus, the 187-residue chain is Anterior gradient protein 1 (187 aa).

The signal sequence occupies residues 1 to 20 (MQTGLSLVCLVLLCSALGEA).

The protein belongs to the AGR family.

The protein localises to the secreted. Functionally, probably involved in cement gland formation. This Xenopus tropicalis (Western clawed frog) protein is Anterior gradient protein 1 (ag1).